The following is a 202-amino-acid chain: MINLLFAVIAYLIGSVSFAVVVSKVMGLPDPHSYGSGNPGATNVLRTGNKKAAIFTLIGDALKGLAAVLLAKHFGPAYGVDETGIALVALAVFLGHLFPLYHRFAGGKGVATAAGILFAIDPILGAGTLATWLIIAFFFRYSSLAALISAIFAPFFYVLMNGVDIMAGAILVISVLLIARHRANIAKLLAGKESRIGEKKKV.

A run of 6 helical transmembrane segments spans residues isoleucine 2 to valine 22, lysine 51 to alanine 71, valine 80 to leucine 100, isoleucine 116 to alanine 136, phenylalanine 137 to tyrosine 157, and valine 158 to isoleucine 178.

It belongs to the PlsY family. Probably interacts with PlsX.

It localises to the cell inner membrane. The catalysed reaction is an acyl phosphate + sn-glycerol 3-phosphate = a 1-acyl-sn-glycero-3-phosphate + phosphate. It participates in lipid metabolism; phospholipid metabolism. Functionally, catalyzes the transfer of an acyl group from acyl-phosphate (acyl-PO(4)) to glycerol-3-phosphate (G3P) to form lysophosphatidic acid (LPA). This enzyme utilizes acyl-phosphate as fatty acyl donor, but not acyl-CoA or acyl-ACP. This Cupriavidus metallidurans (strain ATCC 43123 / DSM 2839 / NBRC 102507 / CH34) (Ralstonia metallidurans) protein is Glycerol-3-phosphate acyltransferase.